A 456-amino-acid polypeptide reads, in one-letter code: Alcohol acyltransferase 1 (456 aa).

Residues His166 and Asp382 each act as proton acceptor in the active site.

Belongs to the plant acyltransferase family.

Functionally, involved in the biosynthesis of volatile esters which confer kiwifruit flavor. Alcohol acyl transferase that can use a wide range of alcohols as substrate to produce esters. The sequence is that of Alcohol acyltransferase 1 from Actinidia chinensis var. chinensis (Chinese soft-hair kiwi).